Here is a 622-residue protein sequence, read N- to C-terminus: 1,4-alpha-glucan branching enzyme GlgB (622 aa).

The active-site Nucleophile is the aspartate 306. Glutamate 358 serves as the catalytic Proton donor. The segment at tyrosine 581–leucine 606 is disordered.

Belongs to the glycosyl hydrolase 13 family. GlgB subfamily. As to quaternary structure, monomer.

It catalyses the reaction Transfers a segment of a (1-&gt;4)-alpha-D-glucan chain to a primary hydroxy group in a similar glucan chain.. It functions in the pathway glycan biosynthesis; glycogen biosynthesis. Catalyzes the formation of the alpha-1,6-glucosidic linkages in glycogen by scission of a 1,4-alpha-linked oligosaccharide from growing alpha-1,4-glucan chains and the subsequent attachment of the oligosaccharide to the alpha-1,6 position. The sequence is that of 1,4-alpha-glucan branching enzyme GlgB from Salinibacter ruber (strain DSM 13855 / M31).